The sequence spans 195 residues: Probable nicotinate-nucleotide adenylyltransferase (195 aa).

Belongs to the NadD family.

The catalysed reaction is nicotinate beta-D-ribonucleotide + ATP + H(+) = deamido-NAD(+) + diphosphate. Its pathway is cofactor biosynthesis; NAD(+) biosynthesis; deamido-NAD(+) from nicotinate D-ribonucleotide: step 1/1. Catalyzes the reversible adenylation of nicotinate mononucleotide (NaMN) to nicotinic acid adenine dinucleotide (NaAD). This is Probable nicotinate-nucleotide adenylyltransferase from Gluconobacter oxydans (strain 621H) (Gluconobacter suboxydans).